The primary structure comprises 152 residues: Putative aluminum-activated malate transporter 11 (152 aa).

A run of 2 helical transmembrane segments spans residues 48–68 (VIHA…YFME) and 78–98 (AIWA…VEGL).

Belongs to the aromatic acid exporter (TC 2.A.85) family.

It is found in the membrane. Functionally, malate transporter. The sequence is that of Putative aluminum-activated malate transporter 11 (ALMT11) from Arabidopsis thaliana (Mouse-ear cress).